Consider the following 839-residue polypeptide: LPS-assembly protein LptD (839 aa).

The first 21 residues, 1 to 21 (MAIGITACVLSLINYQGLAYS), serve as a signal peptide directing secretion.

It belongs to the LptD family. Component of the lipopolysaccharide transport and assembly complex. Interacts with LptE and LptA.

Its subcellular location is the cell outer membrane. Together with LptE, is involved in the assembly of lipopolysaccharide (LPS) at the surface of the outer membrane. The protein is LPS-assembly protein LptD of Legionella pneumophila (strain Lens).